We begin with the raw amino-acid sequence, 86 residues long: MKSIVFVALFGLALLAVACSASEDAHKELLKEVVRAMVVDKTDAVQAEERECRWYLGGCSQDGDCCKHLQCHSNYEWCIWDGTFSK.

The N-terminal stretch at 1–21 is a signal peptide; the sequence is MKSIVFVALFGLALLAVACSA. Positions 22-50 are excised as a propeptide; that stretch reads SEDAHKELLKEVVRAMVVDKTDAVQAEER. 3 disulfides stabilise this stretch: Cys52–Cys66, Cys59–Cys71, and Cys65–Cys78.

It belongs to the neurotoxin 10 (Hwtx-1) family. 17 (Hntx-9) subfamily. As to expression, expressed by the venom gland.

It is found in the secreted. Its function is as follows. Ion channel inhibitor. In Cyriopagopus hainanus (Chinese bird spider), this protein is Omega-theraphotoxin-Hhn1f 3.